Reading from the N-terminus, the 167-residue chain is Dihydrofolate reductase (167 aa).

Positions 1-162 (MFISMWAQDK…YPHRFQKWQK (162 aa)) constitute a DHFR domain. NADP(+) contacts are provided by residues A7 and 13–19 (LIGKDGL). D27 serves as a coordination point for substrate. Residue 45–46 (KT) participates in NADP(+) binding. R58 contributes to the substrate binding site. NADP(+)-binding positions include 64-65 (TT) and 99-106 (GGSRIFQA). T117 is a binding site for substrate.

The protein belongs to the dihydrofolate reductase family.

It carries out the reaction (6S)-5,6,7,8-tetrahydrofolate + NADP(+) = 7,8-dihydrofolate + NADPH + H(+). The protein operates within cofactor biosynthesis; tetrahydrofolate biosynthesis; 5,6,7,8-tetrahydrofolate from 7,8-dihydrofolate: step 1/1. Its function is as follows. Key enzyme in folate metabolism. Catalyzes an essential reaction for de novo glycine and purine synthesis, and for DNA precursor synthesis. This Enterococcus faecium (Streptococcus faecium) protein is Dihydrofolate reductase (folA).